We begin with the raw amino-acid sequence, 338 residues long: Ketol-acid reductoisomerase (NADP(+)) (338 aa).

The region spanning 1–181 (MKVFYDKDAD…GGGRAGIIET (181 aa)) is the KARI N-terminal Rossmann domain. NADP(+) is bound by residues 24–27 (YGSQ), Arg47, and Ser52. His107 is a catalytic residue. Gly133 lines the NADP(+) pocket. Residues 182 to 327 (NFREETETDL…AKLRAMMPWI (146 aa)) form the KARI C-terminal knotted domain. Mg(2+) is bound by residues Asp190, Glu194, Glu226, and Glu230. Residue Ser251 coordinates substrate.

This sequence belongs to the ketol-acid reductoisomerase family. Mg(2+) serves as cofactor.

The enzyme catalyses (2R)-2,3-dihydroxy-3-methylbutanoate + NADP(+) = (2S)-2-acetolactate + NADPH + H(+). It catalyses the reaction (2R,3R)-2,3-dihydroxy-3-methylpentanoate + NADP(+) = (S)-2-ethyl-2-hydroxy-3-oxobutanoate + NADPH + H(+). It participates in amino-acid biosynthesis; L-isoleucine biosynthesis; L-isoleucine from 2-oxobutanoate: step 2/4. The protein operates within amino-acid biosynthesis; L-valine biosynthesis; L-valine from pyruvate: step 2/4. Functionally, involved in the biosynthesis of branched-chain amino acids (BCAA). Catalyzes an alkyl-migration followed by a ketol-acid reduction of (S)-2-acetolactate (S2AL) to yield (R)-2,3-dihydroxy-isovalerate. In the isomerase reaction, S2AL is rearranged via a Mg-dependent methyl migration to produce 3-hydroxy-3-methyl-2-ketobutyrate (HMKB). In the reductase reaction, this 2-ketoacid undergoes a metal-dependent reduction by NADPH to yield (R)-2,3-dihydroxy-isovalerate. The polypeptide is Ketol-acid reductoisomerase (NADP(+)) (Ralstonia pickettii (strain 12J)).